We begin with the raw amino-acid sequence, 208 residues long: Ribosomal RNA large subunit methyltransferase E (208 aa).

S-adenosyl-L-methionine contacts are provided by Gly63, Trp65, Asp83, Asp99, and Asp124. Residue Lys164 is the Proton acceptor of the active site.

The protein belongs to the class I-like SAM-binding methyltransferase superfamily. RNA methyltransferase RlmE family.

The protein resides in the cytoplasm. The catalysed reaction is uridine(2552) in 23S rRNA + S-adenosyl-L-methionine = 2'-O-methyluridine(2552) in 23S rRNA + S-adenosyl-L-homocysteine + H(+). Specifically methylates the uridine in position 2552 of 23S rRNA at the 2'-O position of the ribose in the fully assembled 50S ribosomal subunit. The protein is Ribosomal RNA large subunit methyltransferase E of Salmonella arizonae (strain ATCC BAA-731 / CDC346-86 / RSK2980).